Reading from the N-terminus, the 215-residue chain is Chaperone protein TorD (215 aa).

This sequence belongs to the TorD/DmsD family. TorD subfamily.

The protein resides in the cytoplasm. In terms of biological role, involved in the biogenesis of TorA. Acts on TorA before the insertion of the molybdenum cofactor and, as a result, probably favors a conformation of the apoenzyme that is competent for acquiring the cofactor. This chain is Chaperone protein TorD, found in Aliivibrio salmonicida (strain LFI1238) (Vibrio salmonicida (strain LFI1238)).